The primary structure comprises 46 residues: Large ribosomal subunit protein bL36B (46 aa).

It belongs to the bacterial ribosomal protein bL36 family.

This is Large ribosomal subunit protein bL36B from Cronobacter sakazakii (strain ATCC BAA-894) (Enterobacter sakazakii).